We begin with the raw amino-acid sequence, 106 residues long: ATP-dependent Clp protease adapter protein ClpS (106 aa).

The protein belongs to the ClpS family. Binds to the N-terminal domain of the chaperone ClpA.

Its function is as follows. Involved in the modulation of the specificity of the ClpAP-mediated ATP-dependent protein degradation. This is ATP-dependent Clp protease adapter protein ClpS from Nocardia farcinica (strain IFM 10152).